A 423-amino-acid chain; its full sequence is Probable electron transfer flavoprotein-quinone oxidoreductase YgcN (423 aa).

Position 7-21 (7-21 (IIIIGAGIAGTACAL)) interacts with FAD.

Belongs to the ETF-QO/FixC family. FAD serves as cofactor.

Its function is as follows. Probably accepts electrons from YgcQ/YgcR and reduces a quinone. This Escherichia coli (strain K12) protein is Probable electron transfer flavoprotein-quinone oxidoreductase YgcN (ygcN).